The sequence spans 86 residues: Neuropeptide precursor capa-1 (86 aa).

An N-terminal signal peptide occupies residues 1 to 19 (MLLWIVATLLIFSLPVSTA).

Expressed in two pairs of neurons in the anterior part of the nervous system (at protein level).

In terms of biological role, encodes at least three neuropeptides: two of the periviscerokinin family (APHPSSALLVPYPRV-amide and LYMARV-amide) and one pyrokinin (AFFYTPRI-amide). Its function is as follows. Putative ligand for neuromedin U receptor homolog nmur-2. This is Neuropeptide precursor capa-1 from Caenorhabditis elegans.